Consider the following 141-residue polypeptide: Putative pre-16S rRNA nuclease (141 aa).

Belongs to the YqgF nuclease family.

Its subcellular location is the cytoplasm. In terms of biological role, could be a nuclease involved in processing of the 5'-end of pre-16S rRNA. This Coxiella burnetii (strain RSA 331 / Henzerling II) protein is Putative pre-16S rRNA nuclease.